We begin with the raw amino-acid sequence, 239 residues long: Ribosomal RNA small subunit methyltransferase G (239 aa).

Residues Gly77, Phe82, 128-129, and Arg147 contribute to the S-adenosyl-L-methionine site; that span reads AE.

Belongs to the methyltransferase superfamily. RNA methyltransferase RsmG family.

Its subcellular location is the cytoplasm. Specifically methylates the N7 position of guanine in position 535 of 16S rRNA. This chain is Ribosomal RNA small subunit methyltransferase G, found in Bacillus cereus (strain AH187).